A 491-amino-acid polypeptide reads, in one-letter code: Ketol-acid reductoisomerase (NADP(+)) (491 aa).

The region spanning Ala-15 to Ser-208 is the KARI N-terminal Rossmann domain. NADP(+) contacts are provided by residues Cys-45–Gln-48, Arg-68, Arg-76, Ser-78, and Asp-108–Gln-110. His-132 is an active-site residue. Gly-158 is a binding site for NADP(+). KARI C-terminal knotted domains lie at Ser-209–Gln-344 and Phe-345–Met-484. Asp-217, Glu-221, Glu-389, and Glu-393 together coordinate Mg(2+). Ser-414 is a binding site for substrate.

Belongs to the ketol-acid reductoisomerase family. It depends on Mg(2+) as a cofactor.

The enzyme catalyses (2R)-2,3-dihydroxy-3-methylbutanoate + NADP(+) = (2S)-2-acetolactate + NADPH + H(+). The catalysed reaction is (2R,3R)-2,3-dihydroxy-3-methylpentanoate + NADP(+) = (S)-2-ethyl-2-hydroxy-3-oxobutanoate + NADPH + H(+). It participates in amino-acid biosynthesis; L-isoleucine biosynthesis; L-isoleucine from 2-oxobutanoate: step 2/4. The protein operates within amino-acid biosynthesis; L-valine biosynthesis; L-valine from pyruvate: step 2/4. Functionally, involved in the biosynthesis of branched-chain amino acids (BCAA). Catalyzes an alkyl-migration followed by a ketol-acid reduction of (S)-2-acetolactate (S2AL) to yield (R)-2,3-dihydroxy-isovalerate. In the isomerase reaction, S2AL is rearranged via a Mg-dependent methyl migration to produce 3-hydroxy-3-methyl-2-ketobutyrate (HMKB). In the reductase reaction, this 2-ketoacid undergoes a metal-dependent reduction by NADPH to yield (R)-2,3-dihydroxy-isovalerate. This is Ketol-acid reductoisomerase (NADP(+)) from Salmonella schwarzengrund (strain CVM19633).